Reading from the N-terminus, the 715-residue chain is Elongation factor G (715 aa).

In terms of domain architecture, tr-type G spans 12–309 (RRVRNIGIMA…GVIDYLPSPL (298 aa)). GTP-binding positions include 21–28 (AHIDAGKT), 108–112 (DTPGH), and 162–165 (NKMD).

The protein belongs to the TRAFAC class translation factor GTPase superfamily. Classic translation factor GTPase family. EF-G/EF-2 subfamily.

The protein localises to the cytoplasm. Its function is as follows. Catalyzes the GTP-dependent ribosomal translocation step during translation elongation. During this step, the ribosome changes from the pre-translocational (PRE) to the post-translocational (POST) state as the newly formed A-site-bound peptidyl-tRNA and P-site-bound deacylated tRNA move to the P and E sites, respectively. Catalyzes the coordinated movement of the two tRNA molecules, the mRNA and conformational changes in the ribosome. The protein is Elongation factor G of Rubrobacter xylanophilus (strain DSM 9941 / JCM 11954 / NBRC 16129 / PRD-1).